The chain runs to 672 residues: Flap endonuclease 1 (672 aa).

Positions 1–106 are N-domain; sequence MGIKGLIGFL…QTLAKRKLLR (106 aa). Position 34 (D34) interacts with Mg(2+). Residues R47 and R72 each coordinate DNA. D88, E160, E162, D181, and D183 together coordinate Mg(2+). Residues 124–252 form an I-domain region; that stretch reads AIRKYVGRTV…KTAYNLIKKH (129 aa). A DNA-binding site is contributed by E160. DNA is bound by residues G230 and D232. D232 is a binding site for Mg(2+). An interaction with PCNA region spans residues 327–335; sequence TQLSLKSFF. Positions 361 to 436 are disordered; sequence VESAVDSTSD…DAKKRNKRVP (76 aa). Basic and acidic residues predominate over residues 370-382; the sequence is DDGKDEVPSDDKV.

The protein belongs to the XPG/RAD2 endonuclease family. FEN1 subfamily. Interacts with PCNA. Three molecules of FEN1 bind to one PCNA trimer with each molecule binding to one PCNA monomer. PCNA stimulates the nuclease activity without altering cleavage specificity. Mg(2+) is required as a cofactor. Phosphorylated. Phosphorylation upon DNA damage induces relocalization to the nuclear plasma.

It is found in the nucleus. The protein resides in the nucleolus. It localises to the nucleoplasm. The protein localises to the mitochondrion. Its function is as follows. Structure-specific nuclease with 5'-flap endonuclease and 5'-3' exonuclease activities involved in DNA replication and repair. During DNA replication, cleaves the 5'-overhanging flap structure that is generated by displacement synthesis when DNA polymerase encounters the 5'-end of a downstream Okazaki fragment. It enters the flap from the 5'-end and then tracks to cleave the flap base, leaving a nick for ligation. Also involved in the long patch base excision repair (LP-BER) pathway, by cleaving within the apurinic/apyrimidinic (AP) site-terminated flap. Acts as a genome stabilization factor that prevents flaps from equilibrating into structures that lead to duplications and deletions. Also possesses 5'-3' exonuclease activity on nicked or gapped double-stranded DNA, and exhibits RNase H activity. Also involved in replication and repair of rDNA and in repairing mitochondrial DNA. In Babesia bovis, this protein is Flap endonuclease 1.